The following is a 621-amino-acid chain: Chaperone protein HtpG (621 aa).

The interval 1 to 341 (MSNQEYTFQT…SEDLPLNVSR (341 aa)) is a; substrate-binding. The tract at residues 342-547 (EILQQNKILA…GDEQNAMMAN (206 aa)) is b. Residues 548 to 621 (LMRQMGQNMP…RLNSVLLKAL (74 aa)) form a c region.

The protein belongs to the heat shock protein 90 family. As to quaternary structure, homodimer.

The protein resides in the cytoplasm. Functionally, molecular chaperone. Has ATPase activity. The sequence is that of Chaperone protein HtpG from Helicobacter acinonychis (strain Sheeba).